Here is a 151-residue protein sequence, read N- to C-terminus: Large ribosomal subunit protein bL9 (151 aa).

This sequence belongs to the bacterial ribosomal protein bL9 family.

Binds to the 23S rRNA. The chain is Large ribosomal subunit protein bL9 from Chloroherpeton thalassium (strain ATCC 35110 / GB-78).